The primary structure comprises 355 residues: GTPase Obg (355 aa).

An Obg domain is found at 1 to 159 (MKLVDEAEIL…RLLKLELKLL (159 aa)). An OBG-type G domain is found at 160 to 342 (ADVGLLGFPN…IMKDVMAFFD (183 aa)). GTP-binding positions include 166-173 (GFPNAGKS), 191-195 (FTTLY), 213-216 (DVPG), 292-295 (NKAD), and 323-325 (SAL). Ser-173 and Thr-193 together coordinate Mg(2+).

It belongs to the TRAFAC class OBG-HflX-like GTPase superfamily. OBG GTPase family. Monomer. Mg(2+) serves as cofactor.

It is found in the cytoplasm. Functionally, an essential GTPase which binds GTP, GDP and possibly (p)ppGpp with moderate affinity, with high nucleotide exchange rates and a fairly low GTP hydrolysis rate. Plays a role in control of the cell cycle, stress response, ribosome biogenesis and in those bacteria that undergo differentiation, in morphogenesis control. This chain is GTPase Obg, found in Xanthomonas euvesicatoria pv. vesicatoria (strain 85-10) (Xanthomonas campestris pv. vesicatoria).